The chain runs to 829 residues: Leucine--tRNA ligase (829 aa).

The 'HIGH' region motif lies at 40–50; that stretch reads PYPSGNIHMGH. The 'KMSKS' region motif lies at 581–585; sequence KMSKS. Lys584 lines the ATP pocket.

This sequence belongs to the class-I aminoacyl-tRNA synthetase family.

The protein resides in the cytoplasm. The catalysed reaction is tRNA(Leu) + L-leucine + ATP = L-leucyl-tRNA(Leu) + AMP + diphosphate. The polypeptide is Leucine--tRNA ligase (Nitratidesulfovibrio vulgaris (strain ATCC 29579 / DSM 644 / CCUG 34227 / NCIMB 8303 / VKM B-1760 / Hildenborough) (Desulfovibrio vulgaris)).